The sequence spans 297 residues: uncharacterized protein (297 aa).

7 WD repeats span residues 12-51 (KAKE…CIHE), 54-93 (GHGH…VDRR), 96-135 (GHLA…FSPI), 140-177 (DAKD…LSSD), 179-217 (FSHP…ILKS), 222-261 (KNME…QITS), and 265-297 (VGTP…YQYN).

It belongs to the WD repeat MORG1 family.

The protein resides in the cytoplasm. It is found in the nucleus. This is an uncharacterized protein from Schizosaccharomyces pombe (strain 972 / ATCC 24843) (Fission yeast).